The sequence spans 365 residues: Caffeic acid 3-O-methyltransferase (365 aa).

Asn-131 contributes to the (E)-ferulate binding site. S-adenosyl-L-homocysteine-binding residues include Gly-208, Asp-231, Asp-251, Met-252, Met-264, and Lys-265. His-269 serves as the catalytic Proton acceptor. (E)-5-hydroxyferulate is bound at residue Asp-270. Active-site residues include Glu-297 and Glu-329.

This sequence belongs to the class I-like SAM-binding methyltransferase superfamily. Cation-independent O-methyltransferase family. COMT subfamily. As to quaternary structure, homodimer. As to expression, more abundant in roots and stems.

The catalysed reaction is (E)-caffeate + S-adenosyl-L-methionine = (E)-ferulate + S-adenosyl-L-homocysteine + H(+). It catalyses the reaction (E)-5-hydroxyferulate + S-adenosyl-L-methionine = (E)-sinapate + S-adenosyl-L-homocysteine + H(+). It functions in the pathway aromatic compound metabolism; phenylpropanoid biosynthesis. In terms of biological role, catalyzes the conversion of caffeic acid to ferulic acid and of 5-hydroxyferulic acid to sinapic acid. The resulting products may subsequently be converted to the corresponding alcohols that are incorporated into lignins. The sequence is that of Caffeic acid 3-O-methyltransferase from Medicago sativa (Alfalfa).